The primary structure comprises 216 residues: Protein Syd (216 aa).

The protein belongs to the Syd family.

The protein localises to the cell inner membrane. Interacts with the SecY protein in vivo. May bind preferentially to an uncomplexed state of SecY, thus functioning either as a chelating agent for excess SecY in the cell or as a regulatory factor that negatively controls the translocase function. In Shewanella sp. (strain ANA-3), this protein is Protein Syd.